The sequence spans 442 residues: Tubulin beta chain (442 aa).

Positions 11, 67, 136, 140, 141, 142, and 202 each coordinate GTP. Glutamate 67 contributes to the Mg(2+) binding site.

It belongs to the tubulin family. Dimer of alpha and beta chains. A typical microtubule is a hollow water-filled tube with an outer diameter of 25 nm and an inner diameter of 15 nM. Alpha-beta heterodimers associate head-to-tail to form protofilaments running lengthwise along the microtubule wall with the beta-tubulin subunit facing the microtubule plus end conferring a structural polarity. Microtubules usually have 13 protofilaments but different protofilament numbers can be found in some organisms and specialized cells. It depends on Mg(2+) as a cofactor.

It localises to the cytoplasm. The protein resides in the cytoskeleton. Functionally, tubulin is the major constituent of microtubules, a cylinder consisting of laterally associated linear protofilaments composed of alpha- and beta-tubulin heterodimers. Microtubules grow by the addition of GTP-tubulin dimers to the microtubule end, where a stabilizing cap forms. Below the cap, tubulin dimers are in GDP-bound state, owing to GTPase activity of alpha-tubulin. This is Tubulin beta chain (TUBB) from Euglena gracilis.